A 244-amino-acid chain; its full sequence is Probable histone-lysine N-methyltransferase set-23 (244 aa).

One can recognise a Pre-SET domain in the interval 25-86 (EGCNCEAECS…SCRNRVVQCG (62 aa)). Residues Cys27, Cys29, Cys33, Cys39, Cys41, Cys65, Cys69, Cys71, and Cys78 each coordinate Zn(2+). Residues 89–213 (KKLEIFSTCE…RGEELCYDYG (125 aa)) form the SET domain. Residues 101–103 (KGF), Asp141, Tyr143, Arg170, and 173–174 (NH) each bind S-adenosyl-L-methionine. Zn(2+) is bound by residues Cys176, Cys225, Cys227, and Cys232. The region spanning 221-237 (NRKLCLCKSEKCRKYLP) is the Post-SET domain.

It belongs to the class V-like SAM-binding methyltransferase superfamily. Histone-lysine methyltransferase family. Suvar3-9 subfamily.

It is found in the nucleus. The protein resides in the chromosome. It catalyses the reaction L-lysyl-[histone] + S-adenosyl-L-methionine = N(6)-methyl-L-lysyl-[histone] + S-adenosyl-L-homocysteine + H(+). In terms of biological role, probable histone methyltransferase. Required for embryonic development. The protein is Probable histone-lysine N-methyltransferase set-23 (set-23) of Caenorhabditis elegans.